The following is a 357-amino-acid chain: Ribosomal RNA large subunit methyltransferase M (357 aa).

S-adenosyl-L-methionine-binding positions include serine 183, 216-219 (APGG), aspartate 235, aspartate 255, and aspartate 271. Lysine 300 (proton acceptor) is an active-site residue.

This sequence belongs to the class I-like SAM-binding methyltransferase superfamily. RNA methyltransferase RlmE family. RlmM subfamily. As to quaternary structure, monomer.

The protein localises to the cytoplasm. The catalysed reaction is cytidine(2498) in 23S rRNA + S-adenosyl-L-methionine = 2'-O-methylcytidine(2498) in 23S rRNA + S-adenosyl-L-homocysteine + H(+). Functionally, catalyzes the 2'-O-methylation at nucleotide C2498 in 23S rRNA. This is Ribosomal RNA large subunit methyltransferase M from Pseudomonas syringae pv. syringae (strain B728a).